The primary structure comprises 699 residues: D-(-)-3-hydroxybutyrate oligomer hydrolase (699 aa).

Positions 1–33 are cleaved as a signal peptide; the sequence is MTAIRGGSRRAPGLALALLGGVLLGACHGDENA. The Charge relay system role is filled by Ser311.

This sequence belongs to the D-(-)-3-hydroxybutyrate oligomer hydrolase family.

It localises to the secreted. The catalysed reaction is (3R)-hydroxybutanoate dimer + H2O = 2 (R)-3-hydroxybutanoate + H(+). Its pathway is lipid metabolism; butanoate metabolism. Functionally, participates in the degradation of poly-3-hydroxybutyrate (PHB). It works downstream of poly(3-hydroxybutyrate) depolymerase, hydrolyzing D(-)-3-hydroxybutyrate oligomers of various length (3HB-oligomers) into 3HB-monomers. This chain is D-(-)-3-hydroxybutyrate oligomer hydrolase, found in Burkholderia mallei (strain NCTC 10247).